The following is a 244-amino-acid chain: 1-(5-phosphoribosyl)-5-[(5-phosphoribosylamino)methylideneamino] imidazole-4-carboxamide isomerase (244 aa).

The active-site Proton acceptor is Asp-8. Asp-129 (proton donor) is an active-site residue.

The protein belongs to the HisA/HisF family.

It is found in the cytoplasm. The enzyme catalyses 1-(5-phospho-beta-D-ribosyl)-5-[(5-phospho-beta-D-ribosylamino)methylideneamino]imidazole-4-carboxamide = 5-[(5-phospho-1-deoxy-D-ribulos-1-ylimino)methylamino]-1-(5-phospho-beta-D-ribosyl)imidazole-4-carboxamide. It functions in the pathway amino-acid biosynthesis; L-histidine biosynthesis; L-histidine from 5-phospho-alpha-D-ribose 1-diphosphate: step 4/9. The chain is 1-(5-phosphoribosyl)-5-[(5-phosphoribosylamino)methylideneamino] imidazole-4-carboxamide isomerase from Bradyrhizobium sp. (strain ORS 278).